The chain runs to 255 residues: 5'-nucleotidase SurE (255 aa).

D8, D9, S40, and N95 together coordinate a divalent metal cation.

Belongs to the SurE nucleotidase family. The cofactor is a divalent metal cation.

The protein resides in the cytoplasm. It catalyses the reaction a ribonucleoside 5'-phosphate + H2O = a ribonucleoside + phosphate. Nucleotidase that shows phosphatase activity on nucleoside 5'-monophosphates. This chain is 5'-nucleotidase SurE, found in Solidesulfovibrio magneticus (strain ATCC 700980 / DSM 13731 / RS-1) (Desulfovibrio magneticus).